We begin with the raw amino-acid sequence, 469 residues long: Alpha-2C adrenergic receptor (469 aa).

Residues Met-1–Ser-29 are disordered. Residues Met-1–Val-36 lie on the Extracellular side of the membrane. 2 N-linked (GlcNAc...) asparagine glycosylation sites follow: Asn-8 and Asn-20. A helical transmembrane segment spans residues Ala-37–Leu-62. The Cytoplasmic portion of the chain corresponds to Thr-63–Leu-73. Residues Phe-74–Met-99 form a helical membrane-spanning segment. Topologically, residues Asn-100–Cys-109 are extracellular. Cys-109 and Cys-187 are oxidised to a cystine. Residues Val-110–Leu-132 form a helical membrane-spanning segment. Residues Asp-133–Lys-154 are Cytoplasmic-facing. Residues Gly-155–Leu-175 traverse the membrane as a helical segment. Over Tyr-176–Trp-194 the chain is Extracellular. The helical transmembrane segment at Tyr-195–Val-216 threads the bilayer. Residues Arg-217–Arg-386 lie on the Cytoplasmic side of the membrane. Disordered stretches follow at residues Lys-232–Ala-261 and His-279–Ser-353. Over residues His-279–Arg-296 the composition is skewed to basic residues. Residues Leu-301–Ser-310 show a composition bias toward acidic residues. Residues Arg-331–Ser-353 show a composition bias toward low complexity. A helical transmembrane segment spans residues Phe-387–Phe-407. The Extracellular segment spans residues Thr-408–Lys-427. A helical membrane pass occupies residues Phe-428–Asn-448. Topologically, residues Gln-449 to Gln-469 are cytoplasmic.

The protein belongs to the G-protein coupled receptor 1 family. Adrenergic receptor subfamily. ADRA2C sub-subfamily.

Its subcellular location is the cell membrane. In terms of biological role, alpha-2 adrenergic receptors mediate the catecholamine-induced inhibition of adenylate cyclase through the action of G proteins. This chain is Alpha-2C adrenergic receptor (ADRA2C), found in Didelphis virginiana (North American opossum).